A 602-amino-acid chain; its full sequence is Elongation factor 4 (602 aa).

The tr-type G domain occupies 7-189; the sequence is SKIRNFCIIA…AIVRRVPPPQ (183 aa). GTP-binding positions include 19 to 24 and 136 to 139; these read DHGKST and NKVD.

It belongs to the TRAFAC class translation factor GTPase superfamily. Classic translation factor GTPase family. LepA subfamily.

Its subcellular location is the cell inner membrane. The enzyme catalyses GTP + H2O = GDP + phosphate + H(+). Its function is as follows. Required for accurate and efficient protein synthesis under certain stress conditions. May act as a fidelity factor of the translation reaction, by catalyzing a one-codon backward translocation of tRNAs on improperly translocated ribosomes. Back-translocation proceeds from a post-translocation (POST) complex to a pre-translocation (PRE) complex, thus giving elongation factor G a second chance to translocate the tRNAs correctly. Binds to ribosomes in a GTP-dependent manner. In Prochlorococcus marinus (strain MIT 9301), this protein is Elongation factor 4.